The primary structure comprises 421 residues: AA11 family lytic polysaccharide monooxygenase (421 aa).

Residues 1-19 form the signal peptide; the sequence is MFSKAFLSAALLGAAAVEG. Cu(+)-binding residues include His-20, His-79, and Glu-93. Cystine bridges form between Cys-48–Cys-162, Cys-84–Cys-110, and Cys-201–Cys-235. The N-linked (GlcNAc...) asparagine glycan is linked to Asn-117. The tract at residues 231–349 is disordered; that stretch reads GSQACTGTPT…SSSSSSSGAL (119 aa). The segment covering 247 to 285 has biased composition (low complexity); that stretch reads TAGSSGSSGSSSGSSSGGSSSSAAGSGATAPPAPAVSST. The segment covering 304 to 314 has biased composition (polar residues); the sequence is SPAQPTHTSAP. Residues 315–349 are compositionally biased toward low complexity; sequence SGGSSSGSGSSSGSNSGSSSGSSSSSSSSSSSGAL.

This sequence belongs to the polysaccharide monooxygenase AA11 family. The cofactor is Cu(2+).

Its function is as follows. Lytic polysaccharide monooxygenase (LPMO) that depolymerizes chitin via the oxidation of scissile beta-(1-4)-glycosidic bonds, yielding C1 or C4 oxidation products. Catalysis by LPMOs requires the reduction of the active-site copper from Cu(II) to Cu(I) by a reducing agent and H(2)O(2) or O(2) as a cosubstrate. Active on chitin but has no activity on other substrates, including diverse mannans, cellulose and starch (data not shown). Primary chain cleavage yields predominantly aldonic acid oligosaccharides with even-numbered degrees of polymerization. The protein is AA11 family lytic polysaccharide monooxygenase of Aspergillus oryzae (strain ATCC 42149 / RIB 40) (Yellow koji mold).